A 398-amino-acid polypeptide reads, in one-letter code: Isochorismate synthase DhbC (398 aa).

Serine 271 bears the Phosphoserine mark.

The protein belongs to the isochorismate synthase family.

It carries out the reaction chorismate = isochorismate. It functions in the pathway siderophore biosynthesis; bacillibactin biosynthesis. This chain is Isochorismate synthase DhbC (dhbC), found in Bacillus subtilis (strain 168).